Reading from the N-terminus, the 211-residue chain is Protein-L-isoaspartate O-methyltransferase (211 aa).

S62 is a catalytic residue.

It belongs to the methyltransferase superfamily. L-isoaspartyl/D-aspartyl protein methyltransferase family.

It is found in the cytoplasm. The catalysed reaction is [protein]-L-isoaspartate + S-adenosyl-L-methionine = [protein]-L-isoaspartate alpha-methyl ester + S-adenosyl-L-homocysteine. Its function is as follows. Catalyzes the methyl esterification of L-isoaspartyl residues in peptides and proteins that result from spontaneous decomposition of normal L-aspartyl and L-asparaginyl residues. It plays a role in the repair and/or degradation of damaged proteins. The chain is Protein-L-isoaspartate O-methyltransferase from Shewanella piezotolerans (strain WP3 / JCM 13877).